The following is a 376-amino-acid chain: MYG1 exonuclease (376 aa).

A mitochondrion-targeting transit peptide spans 1–47 (MGHRFLRGLLTLLLPPPPLYTRHRMLGPESVPPPKRSRSKLMAPPRI). Residue serine 120 is modified to Phosphoserine. 2 positions are modified to N6-acetyllysine: lysine 267 and lysine 273.

This sequence belongs to the MYG1 family. As to expression, ubiquitously expressed, with highest levels in testis.

The protein resides in the nucleus. It localises to the nucleoplasm. Its subcellular location is the mitochondrion matrix. It is found in the nucleolus. In terms of biological role, 3'-5' RNA exonuclease which cleaves in situ on specific transcripts in both nucleus and mitochondrion. Involved in regulating spatially segregated organellar RNA processing, acts as a coordinator of nucleo-mitochondrial crosstalk. In nucleolus, processes pre-ribosomal RNA involved in ribosome assembly and alters cytoplasmic translation. In mitochondrial matrix, processes 3'-termini of the mito-ribosomal and messenger RNAs and controls translation of mitochondrial proteins. This Homo sapiens (Human) protein is MYG1 exonuclease.